Reading from the N-terminus, the 256-residue chain is Type III pantothenate kinase (256 aa).

7-14 (DVGNTRLK) is a binding site for ATP. Residues Tyr-96 and 103 to 106 (GADR) each bind substrate. Catalysis depends on Asp-105, which acts as the Proton acceptor. Position 133 (Thr-133) interacts with ATP. Substrate is bound at residue Thr-183.

Belongs to the type III pantothenate kinase family. As to quaternary structure, homodimer. Requires NH4(+) as cofactor. K(+) serves as cofactor.

The protein localises to the cytoplasm. The enzyme catalyses (R)-pantothenate + ATP = (R)-4'-phosphopantothenate + ADP + H(+). The protein operates within cofactor biosynthesis; coenzyme A biosynthesis; CoA from (R)-pantothenate: step 1/5. Catalyzes the phosphorylation of pantothenate (Pan), the first step in CoA biosynthesis. This Verminephrobacter eiseniae (strain EF01-2) protein is Type III pantothenate kinase.